The following is a 1308-amino-acid chain: Limbin (1308 aa).

The N-terminal stretch at 1–26 (MDPSGSRGRPTWVLAGGLLAVALALG) is a signal peptide. The Extracellular portion of the chain corresponds to 27–300 (GRGCLGASSR…VLPHHGLHAA (274 aa)). A disordered region spans residues 36–76 (RPRWRPLGAQPPRDPQVAPRSGPGLRIPPGRSGAGPESSTQ). Residue Asn-220 is glycosylated (N-linked (GlcNAc...) asparagine). A helical transmembrane segment spans residues 301–321 (GFFIAFLLSLVLTWAALFLMV). Residues 322–1308 (RYQCLKGNML…KKAMRALGMD (987 aa)) are Cytoplasmic-facing. Coiled-coil stretches lie at residues 455–578 (TAEC…ELMD), 636–800 (DQME…DRDQ), and 1001–1113 (ASEM…EADT). The segment covering 784–801 (MAARAEQLEGEERDRDQE) has biased composition (basic and acidic residues). The interval 784–816 (MAARAEQLEGEERDRDQEGVQSVRQRLKDDAPE) is disordered.

In terms of assembly, component of the EvC complex composed of EFCAB7, IQCE, EVC2 and EVC; built from two subcomplexes, EVC2:EVC and EFCAB7:IQCE. Interacts with EVC. Interacts (via N-terminal end) with EFCAB7. Interacts (via N-terminal end) with IQCE. As to expression, found in the heart, placenta, lung, liver, skeletal muscle, kidney and pancreas.

It is found in the cell membrane. The protein resides in the cytoplasm. The protein localises to the cytoskeleton. Its subcellular location is the cilium basal body. It localises to the cell projection. It is found in the cilium. The protein resides in the cilium membrane. The protein localises to the nucleus. Its function is as follows. Component of the EvC complex that positively regulates ciliary Hedgehog (Hh) signaling. Plays a critical role in bone formation and skeletal development. May be involved in early embryonic morphogenesis. The chain is Limbin (EVC2) from Homo sapiens (Human).